Here is a 1155-residue protein sequence, read N- to C-terminus: Eukaryotic translation initiation factor 3 subunit A (1155 aa).

A PCI domain is found at L319–T502. Disordered regions lie at residues Q589 to Q613 and A836 to R1155. Basic and acidic residues-rich tracts occupy residues A836 to D900, D925 to S987, S1004 to P1057, and D1066 to K1101. A compositionally biased stretch (gly residues) spans G1104 to N1118. The span at P1125–D1145 shows a compositional bias: basic and acidic residues.

Belongs to the eIF-3 subunit A family. In terms of assembly, component of the eukaryotic translation initiation factor 3 (eIF-3) complex. The eIF-3 complex interacts with pix.

It localises to the cytoplasm. Functionally, RNA-binding component of the eukaryotic translation initiation factor 3 (eIF-3) complex, which is involved in protein synthesis of a specialized repertoire of mRNAs and, together with other initiation factors, stimulates binding of mRNA and methionyl-tRNAi to the 40S ribosome. The eIF-3 complex specifically targets and initiates translation of a subset of mRNAs involved in cell proliferation. This chain is Eukaryotic translation initiation factor 3 subunit A, found in Drosophila pseudoobscura pseudoobscura (Fruit fly).